Reading from the N-terminus, the 161-residue chain is Ribosomal RNA large subunit methyltransferase H (161 aa).

Residues Leu-78, Gly-110, and 129 to 134 contribute to the S-adenosyl-L-methionine site; that span reads LSRLTF.

The protein belongs to the RNA methyltransferase RlmH family. Homodimer.

Its subcellular location is the cytoplasm. It carries out the reaction pseudouridine(1915) in 23S rRNA + S-adenosyl-L-methionine = N(3)-methylpseudouridine(1915) in 23S rRNA + S-adenosyl-L-homocysteine + H(+). Functionally, specifically methylates the pseudouridine at position 1915 (m3Psi1915) in 23S rRNA. The protein is Ribosomal RNA large subunit methyltransferase H of Heliobacterium modesticaldum (strain ATCC 51547 / Ice1).